Consider the following 353-residue polypeptide: Ion-translocating oxidoreductase complex subunit D (353 aa).

The next 4 helical transmembrane spans lie at 20 to 40 (IMLL…YYFG), 44 to 64 (IIQV…ILHL), 77 to 108 (SALL…AIII), and 123 to 143 (PAMV…TSWL). Threonine 187 bears the FMN phosphoryl threonine mark. 4 consecutive transmembrane segments (helical) span residues 214–234 (VIAG…GVFL), 242–262 (WHIP…GWLL), 267–287 (LVTP…FFIA), and 301–318 (LLYG…RSYG).

It belongs to the NqrB/RnfD family. As to quaternary structure, the complex is composed of six subunits: RnfA, RnfB, RnfC, RnfD, RnfE and RnfG. The cofactor is FMN.

It is found in the cell inner membrane. In terms of biological role, part of a membrane-bound complex that couples electron transfer with translocation of ions across the membrane. In Erwinia tasmaniensis (strain DSM 17950 / CFBP 7177 / CIP 109463 / NCPPB 4357 / Et1/99), this protein is Ion-translocating oxidoreductase complex subunit D.